The sequence spans 124 residues: UPF0231 protein Sama_0645 (124 aa).

It belongs to the UPF0231 family.

The polypeptide is UPF0231 protein Sama_0645 (Shewanella amazonensis (strain ATCC BAA-1098 / SB2B)).